Consider the following 861-residue polypeptide: MAEILLTSVINKSVEIAGNLLIQEGKRLYWLKEDIDWLQREMRHIRSYVDNAKAKEAGGDSRVKNLLKDIQELAGDVEDLLDDFLPKIQRSNKFNYCLKTSSFADEFAMEIEKIKRRVVDIDRIRKTYNIIDTDNNNDDCVLLDRRRLFLHADETEIIGLDDDFNMLQAKLLNQDLHYGVVSIVGMPGLGKTTLAKKLYRLIRDQFECSGLVYVSQQPRAGEILLDIAKQIGLTEQKIKENLEDNLRSLLKIKRYVILLDDIWDVEIWDDLKLVLPECDSKVGSRMIITSRNSNVGRYIGGESSLHALQPLESEKSFELFTKKIFNFDDNNSWANASPDLVNIGRNIAGRCGGIPLAIVVTAGMLRARERTEHAWNRVLESMGHKVQDGCAKVLALSYNDLPIASRPCFLYFSLYPEDHEIRAFDLINMWIAEKFIVVNSGNRREAEDLAEDVLNDLVSRNLIQLAKRTYNGRISSCRIHDLLHSLCVDLAKESNFFHTAHDVFGDPGNVARLRRITFYSDNVMIEFFGSNPKLEKLRVLFCFTKDPSIFSHMACFDFKLLHTLVVVMSQSFQAYVTIPSKFGNMTCLRYLKLEGNICGKLPNSIVKLTRLETIDIDRRSLIQLPSGVWESKHLRHLCYRDYGQACNSCFSISSFYPNIYSLHPNNLQTLMWIPDKFFEPRLLHRLINLRKLGILGVSNSTVKILSTCRPVPKALKVLKLRFFSDPSEQINLSSYPKIVKLHLNVDRTIALNSEAFPPNIIKLTLVCFMVDSCLLAVLKTLPKLRKLKMVICKYNEEKMALSGEANGYSFPQLEVLHIHSPNGLSEVTCTDDVSMPKLKKLLLTGFHCGISLSERLKKLSK.

Residues 63–83 adopt a coiled-coil conformation; that stretch reads VKNLLKDIQELAGDVEDLLDD. Residues 162 to 388 form the NB-ARC domain; sequence DDFNMLQAKL…LESMGHKVQD (227 aa). 185-192 serves as a coordination point for ATP; the sequence is GMPGLGKT. LRR repeat units lie at residues 225 to 248, 305 to 327, 388 to 411, 449 to 472, 510 to 536, 585 to 608, 609 to 631, 652 to 680, 689 to 713, 735 to 758, 781 to 804, and 810 to 835; these read LDIA…NLRS, LHAL…IFNF, DGCA…CFLY, LAED…TYNG, VARL…KLEK, MTCL…IVKL, TRLE…VWES, ISSF…FFEP, LRKL…PVPK, YPKI…AFPP, LPKL…LSGE, and FPQL…DVSM.

It belongs to the disease resistance NB-LRR family. In terms of assembly, (Microbial infection) Fails to interact with the tobamovirus mouvement protein of tobacco mosaic virus (TMV).

The protein localises to the cell membrane. In terms of biological role, potential inhibitor of viral mouvements which may confer resistance to some tobamoviruses but not to the tomato mosaic virus (ToMV) and tobacco mosaic virus (TMV). This chain is ToMV susceptible protein tm-2, found in Solanum lycopersicum (Tomato).